Reading from the N-terminus, the 173-residue chain is Lectin BRA-2 (173 aa).

An N-linked (GlcNAc...) asparagine glycan is attached at asparagine 39. 3 disulfides stabilise this stretch: cysteine 47/cysteine 61, cysteine 78/cysteine 168, and cysteine 144/cysteine 160. The region spanning 51–170 is the C-type lectin domain; that stretch reads PNGWVTSENK…NDRYNFVCEI (120 aa).

As to quaternary structure, homohexamer; disulfide-linked. Coelemic fluid.

Sugar-binding protein which recognizes specific carbohydrate structures and agglutinates a variety of animal cells by binding to cell-surface glycoproteins and glycolipids. Calcium-dependent lectin. Invertebrate lectins may be involved in defense functions. This Megabalanus rosa (Acorn barnacle) protein is Lectin BRA-2.